Reading from the N-terminus, the 228-residue chain is Probable transcriptional regulatory protein SilR (228 aa).

In terms of domain architecture, Response regulatory spans lysine 2–leucine 116. At aspartate 51 the chain carries 4-aspartylphosphate. A DNA-binding region (ompR/PhoB-type) is located at residues glutamate 125–isoleucine 225.

Phosphorylated by SilS.

Its subcellular location is the cytoplasm. Its function is as follows. Component of the sil cation-efflux system that confers resistance to silver. Probable member of a two-component regulatory system SilS/SilR. The protein is Probable transcriptional regulatory protein SilR (silR) of Salmonella typhimurium.